Here is a 455-residue protein sequence, read N- to C-terminus: GTPase Der (455 aa).

2 consecutive EngA-type G domains span residues 4-169 (PIVA…PKDQ) and 178-355 (LRVS…GQHQ). Residues 10-17 (GRPNVGKS), 57-61 (DTGGL), 120-123 (NKLE), 184-191 (GRPNVGKS), 233-237 (DTAGI), and 298-301 (NKWD) each bind GTP. The region spanning 356-441 (RRVSTSVLNE…PVRFIFRGKP (86 aa)) is the KH-like domain.

It belongs to the TRAFAC class TrmE-Era-EngA-EngB-Septin-like GTPase superfamily. EngA (Der) GTPase family. In terms of assembly, associates with the 50S ribosomal subunit.

Functionally, GTPase that plays an essential role in the late steps of ribosome biogenesis. The sequence is that of GTPase Der from Gloeobacter violaceus (strain ATCC 29082 / PCC 7421).